A 309-amino-acid polypeptide reads, in one-letter code: Ribonuclease Z (309 aa).

Residues histidine 64, histidine 66, aspartate 68, histidine 69, histidine 141, aspartate 209, and histidine 267 each coordinate Zn(2+). The Proton acceptor role is filled by aspartate 68.

Belongs to the RNase Z family. Homodimer. The cofactor is Zn(2+).

The catalysed reaction is Endonucleolytic cleavage of RNA, removing extra 3' nucleotides from tRNA precursor, generating 3' termini of tRNAs. A 3'-hydroxy group is left at the tRNA terminus and a 5'-phosphoryl group is left at the trailer molecule.. In terms of biological role, zinc phosphodiesterase, which displays some tRNA 3'-processing endonuclease activity. Probably involved in tRNA maturation, by removing a 3'-trailer from precursor tRNA. In Picrophilus torridus (strain ATCC 700027 / DSM 9790 / JCM 10055 / NBRC 100828 / KAW 2/3), this protein is Ribonuclease Z.